We begin with the raw amino-acid sequence, 344 residues long: Bifunctional trans-3-hydroxy-L-proline dehydratase/2-epimerase (344 aa).

Serine 90 functions as the Proton acceptor in the catalytic mechanism. Substrate is bound by residues 91 to 92, aspartate 252, and 257 to 258; these read GS and GT.

It belongs to the proline racemase family.

It catalyses the reaction trans-3-hydroxy-L-proline = 1-pyrroline-2-carboxylate + H2O. The catalysed reaction is trans-3-hydroxy-L-proline = cis-3-hydroxy-D-proline. Functionally, bifunctional enzyme catalyzing both the dehydration of trans-3-hydroxy-L-proline (t3LHyp) to Delta(1)-pyrroline-2-carboxylate (Pyr2C) and 2-epimerization of t3LHyp to cis-3-hydroxy-D-proline (c3DHyp). No dehydratase activity with L-proline, trans-4-hydroxy-L-proline (t4LHyp), cis-4-hydroxy-L-proline (c4LHyp), D-proline, cis-4-hydroxy-D-proline (c4DHyp), trans-4-hydroxy-D-proline (t4DHyp) or L-serine as substrates. Displays neither t4LHyp epimerase nor proline racemase activity. Is likely involved in a degradation pathway that converts t3LHyp to L-proline, which would allow P.aeruginosa to grow on t3LHyp as a sole carbon source. In Pseudomonas aeruginosa (strain ATCC 15692 / DSM 22644 / CIP 104116 / JCM 14847 / LMG 12228 / 1C / PRS 101 / PAO1), this protein is Bifunctional trans-3-hydroxy-L-proline dehydratase/2-epimerase.